A 105-amino-acid chain; its full sequence is Small ribosomal subunit protein eS24 (105 aa).

Positions 86-105 are disordered; the sequence is LERNKIEADEEADEEAAEEA. A compositionally biased stretch (acidic residues) spans 93-105; sequence ADEEADEEAAEEA.

This sequence belongs to the eukaryotic ribosomal protein eS24 family.

This chain is Small ribosomal subunit protein eS24, found in Natronomonas pharaonis (strain ATCC 35678 / DSM 2160 / CIP 103997 / JCM 8858 / NBRC 14720 / NCIMB 2260 / Gabara) (Halobacterium pharaonis).